The sequence spans 435 residues: Protein lin-54 (435 aa).

The segment at 73–136 (DEPIDTSSHR…PASLPRTVQP (64 aa)) is disordered. The span at 102–120 (TPGSSQYTVRNLSNLSGSP) shows a compositional bias: polar residues. The region spanning 173–288 (QRKPCNCTKS…KCKGCQNTET (116 aa)) is the CRC domain. Residues 175–188 (KPCNCTKSQCLKLY) form a DNA-binding region. Residues C177, C179, C184, C189, C191, C198, C201, C203, and C206 each contribute to the Zn(2+) site. The linker stretch occupies residues 235–250 (IGIARGGITDIERLHQ). 9 residues coordinate Zn(2+): C253, C255, C260, C265, C267, C274, C278, C280, and C283. Residues 253 to 266 (CHCKKSGCLKNYCE) are DNA-binding. Residues 415-435 (LTQDLDAAPTDDIPGPSTSTS) form a disordered region.

The protein belongs to the lin-54 family. Component of the DRM complex, at least composed of lin-9, lin-35, lin-37, lin-52, lin-53, lin-54- dpl-1 and efl-1.

Its subcellular location is the nucleus. It localises to the chromosome. Synthetic multivulva class B (synMuvB) protein. SynMuvB proteins are required to repress the induction of vulval development by Ras signaling and probably act by forming the multiprotein DRM complex that repress transcription. The protein is Protein lin-54 of Caenorhabditis elegans.